Consider the following 340-residue polypeptide: Alpha-1,4-N-acetylglucosaminyltransferase (340 aa).

Residues 1–4 (MRKE) are Cytoplasmic-facing. A helical; Signal-anchor for type II membrane protein membrane pass occupies residues 5 to 25 (LQLSLSVTLLLVCGFLYQFTL). Residues 26–340 (KSSCLFCLPS…VTGELGPGNK (315 aa)) are Lumenal-facing. N-linked (GlcNAc...) asparagine glycans are attached at residues Asn-99 and Asn-138. The DXD motif motif lies at 167–169 (DTD). Asn-251 and Asn-282 each carry an N-linked (GlcNAc...) asparagine glycan.

This sequence belongs to the glycosyltransferase 32 family. Detected in stomach and pancreas.

It localises to the golgi apparatus membrane. The protein operates within protein modification; protein glycosylation. Its function is as follows. Catalyzes the transfer of N-acetylglucosamine (GlcNAc) to core 2 branched O-glycans. Necessary for the synthesis of type III mucin which is specifically produced in the stomach, duodenum, and pancreatic duct. May protect against inflammation-associated gastric adenocarcinomas. The chain is Alpha-1,4-N-acetylglucosaminyltransferase (A4GNT) from Homo sapiens (Human).